Here is a 250-residue protein sequence, read N- to C-terminus: Flavin-dependent thymidylate synthase (250 aa).

In terms of domain architecture, ThyX spans 7–233; it reads LSVELIACSS…PTVFGDFQVE (227 aa). Residues 92 to 95, 103 to 107, and arginine 172 contribute to the dUMP site; these read ELVR and QLSQR. Residues 95 to 97 and glutamine 103 each bind FAD; that span reads RHR. Positions 95 to 105 match the ThyX motif motif; that stretch reads RHRHFSFSQLS. Residues 188 to 190 and histidine 194 contribute to the FAD site; that span reads NFR. Arginine 199 lines the dUMP pocket. Arginine 199 functions as the Involved in ionization of N3 of dUMP, leading to its activation in the catalytic mechanism.

The protein belongs to the thymidylate synthase ThyX family. As to quaternary structure, homotetramer. FAD serves as cofactor.

It catalyses the reaction dUMP + (6R)-5,10-methylene-5,6,7,8-tetrahydrofolate + NADPH + H(+) = dTMP + (6S)-5,6,7,8-tetrahydrofolate + NADP(+). Its pathway is pyrimidine metabolism; dTTP biosynthesis. In terms of biological role, catalyzes the reductive methylation of 2'-deoxyuridine-5'-monophosphate (dUMP) to 2'-deoxythymidine-5'-monophosphate (dTMP) while utilizing 5,10-methylenetetrahydrofolate (mTHF) as the methyl donor, and NADPH and FADH(2) as the reductant. This is Flavin-dependent thymidylate synthase from Corynebacterium efficiens (strain DSM 44549 / YS-314 / AJ 12310 / JCM 11189 / NBRC 100395).